Consider the following 152-residue polypeptide: MSFTQIARSCSRLAATLAPRRVASGILIQSQASRMMHRIAVPSMTSQLSQECRGRWQTQLVRKYSAKPPLSLKLINERVLLVLKLYDKIDPSKLNVESHFINDLGLDSLDHVEVIMAMEDEFGFEIPDSDAEKLLKPADIIKYVADKEDVYE.

Positions 73–148 constitute a Carrier domain; the sequence is KLINERVLLV…DIIKYVADKE (76 aa). Ser-108 is subject to O-(pantetheine 4'-phosphoryl)serine.

This sequence belongs to the acyl carrier protein (ACP) family. In terms of assembly, complex I is composed of about 45 different subunits.

The protein localises to the mitochondrion. Carrier of the growing fatty acid chain in fatty acid biosynthesis. Accessory and non-catalytic subunit of the mitochondrial membrane respiratory chain NADH dehydrogenase (Complex I), which functions in the transfer of electrons from NADH to the respiratory chain. The polypeptide is Acyl carrier protein, mitochondrial (Drosophila melanogaster (Fruit fly)).